Consider the following 333-residue polypeptide: Homeobox protein HMX1 (333 aa).

3 disordered regions span residues 1 to 74, 86 to 109, and 139 to 204; these read MAQD…STSA, GTEGGGGTRRAAAGGGGGRGAPRC, and CASP…KKKT. Polar residues predominate over residues 17-30; it reads DYTQGNTDRSTAAA. Over residues 87 to 105 the composition is skewed to gly residues; that stretch reads TEGGGGTRRAAAGGGGGRG. Residues 144–158 are compositionally biased toward basic and acidic residues; it reads TSDRDSPELPEDTER. A compositionally biased stretch (gly residues) spans 159–176; it reads AGGGGRAAARGPAGGRQS. Residues 181-192 are compositionally biased toward acidic residues; sequence EEEEERGEEAGE. The homeobox DNA-binding region spans 201–260; that stretch reads KKKTRTVFSRSQVFQLESTFDVKRYLSSSERAGLAASLHLTETQVKIWFQNRRNKWKRQL. The HMX family specific domain 1 motif lies at 261–271; sequence AADLEAANLSH.

Belongs to the HMX homeobox family.

Its subcellular location is the nucleus. DNA-binding protein that binds to the 5'-CAAG-3' core sequence. May function as a transcriptional repressor. Seems to act as a transcriptional antagonist of NKX2-5. May play an important role in the development of craniofacial structures such as the eye and ear. This is Homeobox protein HMX1 (HMX1) from Gallus gallus (Chicken).